The following is a 610-amino-acid chain: Elongation factor 4 (610 aa).

Residues 11 to 193 (EKIRNFSIIA…QIVEKVPAPT (183 aa)) enclose the tr-type G domain. Residues 23 to 28 (DHGKST) and 140 to 143 (NKID) each bind GTP.

The protein belongs to the TRAFAC class translation factor GTPase superfamily. Classic translation factor GTPase family. LepA subfamily.

The protein resides in the cell membrane. It catalyses the reaction GTP + H2O = GDP + phosphate + H(+). Functionally, required for accurate and efficient protein synthesis under certain stress conditions. May act as a fidelity factor of the translation reaction, by catalyzing a one-codon backward translocation of tRNAs on improperly translocated ribosomes. Back-translocation proceeds from a post-translocation (POST) complex to a pre-translocation (PRE) complex, thus giving elongation factor G a second chance to translocate the tRNAs correctly. Binds to ribosomes in a GTP-dependent manner. The chain is Elongation factor 4 from Streptococcus pyogenes serotype M6 (strain ATCC BAA-946 / MGAS10394).